The following is a 402-amino-acid chain: D-galactonate dehydratase family member EGBG_02030 (402 aa).

Asp207 contributes to the Mg(2+) binding site. His209 is a D-arabinonate binding site. Mg(2+) contacts are provided by Glu233 and Glu259. The D-arabinonate site is built by Glu259, Arg280, His309, and Glu336.

This sequence belongs to the mandelate racemase/muconate lactonizing enzyme family. GalD subfamily.

In terms of biological role, has no detectable activity with D-mannonate and with a panel of 70 other acid sugars (in vitro), in spite of the conservation of the residues that are expected to be important for catalytic activity and cofactor binding. May have evolved a divergent function. This chain is D-galactonate dehydratase family member EGBG_02030, found in Enterococcus gallinarum (strain EG2).